Consider the following 304-residue polypeptide: Probable 5-dehydro-4-deoxyglucarate dehydratase (304 aa).

Belongs to the DapA family.

It catalyses the reaction 5-dehydro-4-deoxy-D-glucarate + H(+) = 2,5-dioxopentanoate + CO2 + H2O. It participates in carbohydrate acid metabolism; D-glucarate degradation; 2,5-dioxopentanoate from D-glucarate: step 2/2. The chain is Probable 5-dehydro-4-deoxyglucarate dehydratase from Methylobacterium radiotolerans (strain ATCC 27329 / DSM 1819 / JCM 2831 / NBRC 15690 / NCIMB 10815 / 0-1).